The following is a 155-amino-acid chain: Endoribonuclease YbeY (155 aa).

3 residues coordinate Zn(2+): histidine 118, histidine 122, and histidine 128.

This sequence belongs to the endoribonuclease YbeY family. Zn(2+) is required as a cofactor.

It localises to the cytoplasm. Functionally, single strand-specific metallo-endoribonuclease involved in late-stage 70S ribosome quality control and in maturation of the 3' terminus of the 16S rRNA. This Bordetella petrii (strain ATCC BAA-461 / DSM 12804 / CCUG 43448) protein is Endoribonuclease YbeY.